Consider the following 382-residue polypeptide: Gap junction alpha-1 protein (382 aa).

Over 2 to 23 (GDWSALGKLLDKVQAYSTAGGK) the chain is Cytoplasmic. A Phosphoserine modification is found at Ser-5. A helical transmembrane segment spans residues 24–44 (VWLSVLFIFRILLLGTAVESA). The Extracellular segment spans residues 45 to 76 (WGDEQSAFRCNTQQPGCENVCYDKSFPISHVR). Disulfide bonds link Cys-54–Cys-192 and Cys-187–Cys-198. Residues 77 to 97 (FWVLQIIFVSVPTLLYLAHVF) form a helical membrane-spanning segment. The Cytoplasmic segment spans residues 98–155 (YVMRKEEKLNKKEEELKVAQTDGVNVEMHLKQIEIKKFKYGIEEHGKVKMRGGLLRTY). Residue Lys-144 forms a Glycyl lysine isopeptide (Lys-Gly) (interchain with G-Cter in SUMO) linkage. The chain crosses the membrane as a helical span at residues 156 to 176 (IISILFKSVFEVAFLLIQWYI). At 177–207 (YGFSLSAVYTCKRDPCPHQVDCFLSRPTEKT) the chain is on the extracellular side. A helical membrane pass occupies residues 208-228 (IFIIFMLVVSLVSLALNIIEL). The Cytoplasmic segment spans residues 229–382 (FYVFFKGVKD…SRPRPDDLEI (154 aa)). A Glycyl lysine isopeptide (Lys-Gly) (interchain with G-Cter in SUMO) cross-link involves residue Lys-237. An interaction with NOV region spans residues 244-382 (SDPYHATTGP…SRPRPDDLEI (139 aa)). Tyr-247 carries the phosphotyrosine modification. Residues Ser-255, Ser-257, and Ser-262 each carry the phosphoserine modification. The segment at 264–382 (KYAYFNGCSS…SRPRPDDLEI (119 aa)) is interaction with UBQLN4. An S-nitrosocysteine modification is found at Cys-271. Phosphothreonine is present on Thr-275. A phosphoserine mark is found at Ser-306, Ser-314, and Ser-325. Over residues 317–332 (QNRMGQAGSTISNSHA) the composition is skewed to polar residues. Residues 317–382 (QNRMGQAGST…SRPRPDDLEI (66 aa)) are disordered. Phosphothreonine is present on Thr-326. Phosphoserine is present on residues Ser-328, Ser-330, and Ser-365. A compositionally biased stretch (low complexity) spans 362-374 (RPSSRASSRASSR). Ser-368 is modified (phosphoserine; by PKC/PRKCG and PKC/PRKCD). 2 positions are modified to phosphoserine: Ser-369 and Ser-373.

It belongs to the connexin family. Alpha-type (group II) subfamily. A connexon is composed of a hexamer of connexins. Interacts with SGSM3. Interacts with RIC1/CIP150. Interacts with CNST and CSNK1D. Interacts (via C-terminus) with TJP1. Interacts (via C-terminus) with SRC (via SH3 domain). Interacts (not ubiquitinated) with UBQLN4 (via UBA domain). Interacts with NOV. Interacts with TMEM65. Interacts with ANK3/ANKG and PKP2. Post-translationally, contains at least one intramolecular disulfide bond. Phosphorylation at Ser-325, Ser-328 and Ser-330 by CK1 modulates gap junction assembly. Phosphorylated at Ser-368 by PRKCG; phosphorylation induces disassembly of gap junction plaques and inhibition of gap junction activity. Phosphorylation at Ser-368 by PRKCD triggers its internalization into small vesicles leading to proteasome-mediated degradation. In terms of processing, sumoylated with SUMO1, SUMO2 and SUMO3, which may regulate the level of functional Cx43 gap junctions at the plasma membrane. May be desumoylated by SENP1 or SENP2. Post-translationally, S-nitrosylation at Cys-271 is enriched at the muscle endothelial gap junction in arteries, it augments channel permeability and may regulate of smooth muscle cell to endothelial cell communication. Acetylated in the developing cortex; leading to delocalization from the cell membrane. As to expression, detected in ventricle and atrium (at protein level).

The protein localises to the cell membrane. Its subcellular location is the cell junction. It is found in the gap junction. The protein resides in the endoplasmic reticulum. In terms of biological role, gap junction protein that acts as a regulator of bladder capacity. A gap junction consists of a cluster of closely packed pairs of transmembrane channels, the connexons, through which materials of low MW diffuse from one cell to a neighboring cell. Negative regulator of bladder functional capacity: acts by enhancing intercellular electrical and chemical transmission, thus sensitizing bladder muscles to cholinergic neural stimuli and causing them to contract. May play a role in cell growth inhibition through the regulation of NOV expression and localization. Plays an essential role in gap junction communication in the ventricles. In Rattus norvegicus (Rat), this protein is Gap junction alpha-1 protein (Gja1).